Consider the following 397-residue polypeptide: MGNKKIVLAYSGGLDTSVAVKWLTDKGFDVIAACMDVGEGKDLNFIHDKALQVGAVESVVLNCKAEFAEIFVGAALKGNLMYENKYPLVSALSRPLIAKKLVEVAKEKGATAIAHGCTGKGNDQVRFEVAIHSLAPELEVIAPVREWHWAREEEIEYANQNGVPIPADLDNPYSIDMNLWGRAIEAGVLENPWNTCPEDAFFMINSVEDAPNEPEFIEVEFKEGLPIALNGKIMELHEIIKEVNIIAGKHGVGRIDHIENRLVGIKSREFYECPAAITLLKAHKDLEDLTFVRELAHFKPVLENELANLIYNGLWFNPATKALIAYLDETQKVVNGIVRIKLYKGLATPIGRKSTNSLYSEKLATYTAADEFDQAAAVGFIKLWGLPTQVNAQVNLK.

9-17 is an ATP binding site; sequence AYSGGLDTS. Y86 lines the L-citrulline pocket. Residue G116 participates in ATP binding. Residues T118, N122, and D123 each coordinate L-aspartate. N122 contributes to the L-citrulline binding site. Residues R126, S174, E259, and Y271 each coordinate L-citrulline.

It belongs to the argininosuccinate synthase family. Type 1 subfamily. In terms of assembly, homotetramer.

It is found in the cytoplasm. It carries out the reaction L-citrulline + L-aspartate + ATP = 2-(N(omega)-L-arginino)succinate + AMP + diphosphate + H(+). It participates in amino-acid biosynthesis; L-arginine biosynthesis; L-arginine from L-ornithine and carbamoyl phosphate: step 2/3. The chain is Argininosuccinate synthase from Lactococcus lactis subsp. cremoris (strain SK11).